The following is a 95-amino-acid chain: Feather keratin B-4 (95 aa).

Position 1 is an N-acetylserine (S1).

This sequence belongs to the avian keratin family. As to quaternary structure, the avian keratins (F-ker, S-ker, C-ker and B-ker) are a complex mixture of very similar polypeptides.

This chain is Feather keratin B-4, found in Anas platyrhynchos (Mallard).